Consider the following 633-residue polypeptide: 1-deoxy-D-xylulose-5-phosphate synthase (633 aa).

Residues histidine 72 and 113-115 (GHS) contribute to the thiamine diphosphate site. Aspartate 144 provides a ligand contact to Mg(2+). Thiamine diphosphate-binding positions include 145 to 146 (GA), asparagine 173, tyrosine 284, and glutamate 367. Residue asparagine 173 participates in Mg(2+) binding.

It belongs to the transketolase family. DXPS subfamily. As to quaternary structure, homodimer. Mg(2+) serves as cofactor. The cofactor is thiamine diphosphate.

The enzyme catalyses D-glyceraldehyde 3-phosphate + pyruvate + H(+) = 1-deoxy-D-xylulose 5-phosphate + CO2. Its pathway is metabolic intermediate biosynthesis; 1-deoxy-D-xylulose 5-phosphate biosynthesis; 1-deoxy-D-xylulose 5-phosphate from D-glyceraldehyde 3-phosphate and pyruvate: step 1/1. In terms of biological role, catalyzes the acyloin condensation reaction between C atoms 2 and 3 of pyruvate and glyceraldehyde 3-phosphate to yield 1-deoxy-D-xylulose-5-phosphate (DXP). This chain is 1-deoxy-D-xylulose-5-phosphate synthase, found in Bacillus velezensis (strain DSM 23117 / BGSC 10A6 / LMG 26770 / FZB42) (Bacillus amyloliquefaciens subsp. plantarum).